Here is a 100-residue protein sequence, read N- to C-terminus: MAKVKIKPLEDKILVQAGEAETMTPSGLVIPENAKEKPQEGTVVAVGPGRWDEDGAKRIPVDVSEGDIVIYSKYGGTEIKYNGEEYLILSARDVLAVVSK.

The protein belongs to the GroES chaperonin family. As to quaternary structure, heptamer of 7 subunits arranged in a ring. Interacts with the chaperonin GroEL.

It localises to the cytoplasm. Its function is as follows. Together with the chaperonin GroEL, plays an essential role in assisting protein folding. The GroEL-GroES system forms a nano-cage that allows encapsulation of the non-native substrate proteins and provides a physical environment optimized to promote and accelerate protein folding. GroES binds to the apical surface of the GroEL ring, thereby capping the opening of the GroEL channel. The sequence is that of Co-chaperonin GroES from Mycobacterium leprae (strain Br4923).